The sequence spans 209 residues: Small ribosomal subunit protein uS3 (209 aa).

The KH type-2 domain occupies 38 to 107 (IRKVIKNKYA…RFIVNVEEIK (70 aa)).

It belongs to the universal ribosomal protein uS3 family. In terms of assembly, part of the 30S ribosomal subunit. Forms a tight complex with proteins S10 and S14.

Functionally, binds the lower part of the 30S subunit head. Binds mRNA in the 70S ribosome, positioning it for translation. This Thermosipho africanus (strain TCF52B) protein is Small ribosomal subunit protein uS3.